We begin with the raw amino-acid sequence, 98 residues long: Beta-2-microglobulin (98 aa).

Residues 4–92 enclose the Ig-like C1-type domain; it reads PKVQVYSRFP…HETLKEPQVY (89 aa). The cysteines at positions 24 and 79 are disulfide-linked.

Belongs to the beta-2-microglobulin family. Heterodimer of an alpha chain and a beta chain. Beta-2-microglobulin is the beta-chain of major histocompatibility complex class I molecules.

Its subcellular location is the secreted. Its function is as follows. Component of the class I major histocompatibility complex (MHC). Involved in the presentation of peptide antigens to the immune system. In Meleagris gallopavo (Wild turkey), this protein is Beta-2-microglobulin (B2M).